A 494-amino-acid polypeptide reads, in one-letter code: MSTGTFIVSQPLNYRGGARVDPVDASGTEKAFEPATGRVIATFTCSGEKEVNLAVQDAKAAFKIWSQKSGMERCRILLEAARIIRERKEEIATMETINNGKSIFEARLDVDISWQCLEYYAGLAGSMAGEHIQLPGGSFGYTRREPLGVCVGIGAWNYPFQIACWKSAPALACGNAMIFKPSPFTPLSVLLLAEIYTEAGVPPGLFNVVQGGATTGQLLCQHRDVAKISFTGSVPTGSKIMEMSAKGIKPVTLELGGKSPLIIFSDCDMGNAVKGALMANFLTQGEVCCNGTRVFVQKEILDKFTEEVVKQTQRIKIGDPLLEDTRMGPLINRPHLERILGFVKVAKEQGAKVLCGGDLYVPEDPKLKEGYYMRPCVLTNCRDDMTCVKEEIFGPVMSILSFDTEAEVVERANDTTFGLAAGVFTRDIQRAHRVVAELQAGMCFINNYNVSPVELPFGGYKKSGFGRENGRVTIEYYSQLKTVCVEMGDVESVF.

S2 carries the post-translational modification N-acetylserine. K30 carries the N6-acetyllysine; alternate modification. An N6-succinyllysine; alternate modification is found at K30. K59 is subject to N6-succinyllysine. NAD(+) contacts are provided by residues K180 and 232 to 236 (GSVPT). E254 acts as the Proton acceptor in catalysis. C288 acts as the Nucleophile in catalysis. N6-acetyllysine is present on K298. An N6-acetyllysine; alternate modification is found at K303. The residue at position 303 (K303) is an N6-succinyllysine; alternate. K344 bears the N6-acetyllysine mark. Residue E391 participates in NAD(+) binding.

It belongs to the aldehyde dehydrogenase family. Homotetramer.

The protein resides in the cytoplasm. Its subcellular location is the cytosol. It carries out the reaction 4-(trimethylamino)butanal + NAD(+) + H2O = 4-(trimethylamino)butanoate + NADH + 2 H(+). It catalyses the reaction an aldehyde + NAD(+) + H2O = a carboxylate + NADH + 2 H(+). The enzyme catalyses 4-aminobutanal + NAD(+) + H2O = 4-aminobutanoate + NADH + 2 H(+). The catalysed reaction is formaldehyde + NAD(+) + H2O = formate + NADH + 2 H(+). It carries out the reaction acetaldehyde + NAD(+) + H2O = acetate + NADH + 2 H(+). It catalyses the reaction imidazole-4-acetaldehyde + NAD(+) + H2O = imidazole-4-acetate + NADH + 2 H(+). The enzyme catalyses acrolein + NAD(+) + H2O = acrylate + NADH + 2 H(+). The catalysed reaction is (5-hydroxyindol-3-yl)acetaldehyde + NAD(+) + H2O = (5-hydroxyindol-3-yl)acetate + NADH + 2 H(+). It carries out the reaction 3,4-dihydroxyphenylacetaldehyde + NAD(+) + H2O = 3,4-dihydroxyphenylacetate + NADH + 2 H(+). It catalyses the reaction spermine monoaldehyde + NAD(+) + H2O = N-(2-carboxyethyl)spermidine + NADH + 2 H(+). The enzyme catalyses propanal + NAD(+) + H2O = propanoate + NADH + 2 H(+). The catalysed reaction is butanal + NAD(+) + H2O = butanoate + NADH + 2 H(+). It carries out the reaction pentanal + NAD(+) + H2O = pentanoate + NADH + 2 H(+). It catalyses the reaction hexanal + NAD(+) + H2O = hexanoate + NADH + 2 H(+). It participates in amine and polyamine biosynthesis; carnitine biosynthesis. Converts gamma-trimethylaminobutyraldehyde into gamma-butyrobetaine with high efficiency (in vitro). Can catalyze the irreversible oxidation of a broad range of aldehydes to the corresponding acids in an NAD-dependent reaction, but with low efficiency. Catalyzes the oxidation of aldehydes arising from biogenic amines and polyamines. In Sus scrofa (Pig), this protein is 4-trimethylaminobutyraldehyde dehydrogenase (ALDH9A1).